We begin with the raw amino-acid sequence, 242 residues long: Uridylate kinase (242 aa).

Lys-12–Gly-15 provides a ligand contact to ATP. Residues Gly-20–Gly-25 are involved in allosteric activation by GTP. Gly-54 provides a ligand contact to UMP. Residues Gly-55 and Arg-59 each coordinate ATP. UMP is bound by residues Asp-74 and Thr-135–Thr-142. Asn-163, Tyr-169, and Asp-172 together coordinate ATP.

Belongs to the UMP kinase family. Homohexamer.

The protein localises to the cytoplasm. It carries out the reaction UMP + ATP = UDP + ADP. Its pathway is pyrimidine metabolism; CTP biosynthesis via de novo pathway; UDP from UMP (UMPK route): step 1/1. Its activity is regulated as follows. Allosterically activated by GTP. Inhibited by UTP. Functionally, catalyzes the reversible phosphorylation of UMP to UDP. This Listeria innocua serovar 6a (strain ATCC BAA-680 / CLIP 11262) protein is Uridylate kinase.